The primary structure comprises 299 residues: HTH-type transcriptional regulator PgrR (299 aa).

Positions Glu-4 to Thr-61 constitute an HTH lysR-type domain. The segment at residues Phe-21–Arg-40 is a DNA-binding region (H-T-H motif).

This sequence belongs to the LysR transcriptional regulatory family.

Its function is as follows. Regulates the expression of genes involved in peptidoglycan (PG) degradation. Could play a role in switch control between recycling and degradation of PG peptides. Negatively regulates the expression of the ycjY-ymjD-ymjC-mpaA operon by binding to the PgrR-box. In addition, other genes are predicted to be under the control of PgrR, including genes related to membrane formation and function. The protein is HTH-type transcriptional regulator PgrR (pgrR) of Escherichia coli (strain K12).